Here is a 105-residue protein sequence, read N- to C-terminus: Large ribosomal subunit protein bL21 (105 aa).

It belongs to the bacterial ribosomal protein bL21 family. Part of the 50S ribosomal subunit. Contacts protein L20.

Its function is as follows. This protein binds to 23S rRNA in the presence of protein L20. The sequence is that of Large ribosomal subunit protein bL21 from Bacteroides fragilis (strain YCH46).